The sequence spans 357 residues: Ribosomal RNA large subunit methyltransferase M (357 aa).

Residues S183, 216–219 (APGG), D235, D255, and D271 contribute to the S-adenosyl-L-methionine site. The Proton acceptor role is filled by K300.

This sequence belongs to the class I-like SAM-binding methyltransferase superfamily. RNA methyltransferase RlmE family. RlmM subfamily. Monomer.

It is found in the cytoplasm. The catalysed reaction is cytidine(2498) in 23S rRNA + S-adenosyl-L-methionine = 2'-O-methylcytidine(2498) in 23S rRNA + S-adenosyl-L-homocysteine + H(+). Catalyzes the 2'-O-methylation at nucleotide C2498 in 23S rRNA. The polypeptide is Ribosomal RNA large subunit methyltransferase M (Pseudomonas savastanoi pv. phaseolicola (strain 1448A / Race 6) (Pseudomonas syringae pv. phaseolicola (strain 1448A / Race 6))).